The sequence spans 145 residues: Putative type I specificity subunit S.MpnORF289P C-terminus (145 aa).

This sequence belongs to the type-I restriction system S methylase family. As to quaternary structure, the methyltransferase is composed of M and S polypeptides.

Its function is as follows. The C-terminal section of a specificity (S) subunit of a type I methyltransferase (MTase); this subunit dictates DNA sequence specificity. The single R subunit has multiple frameshifts and is probably not expressed. This Mycoplasma pneumoniae (strain ATCC 29342 / M129 / Subtype 1) (Mycoplasmoides pneumoniae) protein is Putative type I specificity subunit S.MpnORF289P C-terminus.